The following is a 145-amino-acid chain: Large ribosomal subunit protein uL24 (145 aa).

Disordered stretches follow at residues 1–21 and 122–145; these read MKFNPFVTSDRSKNRKRHFNA and KAKSRQVGKEKGKYKEETIEKMQE. Lys136 participates in a covalent cross-link: Glycyl lysine isopeptide (Lys-Gly) (interchain with G-Cter in SUMO2). Phosphothreonine is present on Thr139.

The protein belongs to the universal ribosomal protein uL24 family. As to quaternary structure, component of the large ribosomal subunit. Interacts with DHX33. In terms of processing, ufmylated by UFL1 in response to endoplasmic reticulum stress, promoting reticulophagy of endoplasmic reticulum sheets.

It is found in the cytoplasm. Its function is as follows. Component of the large ribosomal subunit. The ribosome is a large ribonucleoprotein complex responsible for the synthesis of proteins in the cell. This Rattus norvegicus (Rat) protein is Large ribosomal subunit protein uL24 (Rpl26).